The sequence spans 127 residues: Major sperm protein 49 (127 aa).

Ala2 carries the N-acetylalanine modification. Residues 9–126 (DIQTQPGTKI…RRKNLPIEYN (118 aa)) enclose the MSP domain.

In terms of tissue distribution, sperm.

The protein resides in the cell projection. The protein localises to the pseudopodium. It localises to the cytoplasm. It is found in the cytoskeleton. In terms of biological role, central component in molecular interactions underlying sperm crawling. Forms an extensive filament system that extends from sperm villipoda, along the leading edge of the pseudopod. The sequence is that of Major sperm protein 49 (msp-49) from Caenorhabditis elegans.